The primary structure comprises 802 residues: MKFTLSWLKDHLETDEPLDRLAEKLTMIGLEVENIEDKAKALKPFTIARVISAEQHPNADRLRVCMVDTGDGGAPVQVVCGAPNARAGLVSVFSAPGTYIPGKDITLGVGTIRGVESRGMLCSAAELQISNDHDGIMELPADAPIGAAYAEWAALGDPVVEINLTPNRQDCTGVHGIARDLAAADMGKFKDPTIKPVKGEFPCPVKVTVEDATLCPGFALRLVRGVKNGPSPEWLQKRLTAIGLRPINALVDITNFMTYDRARPLHVFDARKVKGNLVVRRARDGETLLALDGRTYNLDPATCVIADEHGVESLAGIMGGEASGCDENTTDVLIESALWNEINIAQTGRKLGINSDARYRFERGVDPAFMVPGLELATKLVMEMCGGAPSENVVVGKAFGDDRVIDFPVTEVKRLSGIEVPQPEMKRILTHLGFMMAGPGPVVKVAVPSWRTDVHGKADIVEEIVRIYGVDKVPMTPFERGDDARKPVLTPLQLRTRRARRALASRGIIEAVTWSFITKSAAKLFGGGQRELEVANPIASDLSDMRPTLLAGLIAAAQANADRGFGDVALFEVGQVFKGDRPQDQFMAASGVRRGFASSEGLGRHWSGSVQADLFDAKADALAVLAAAGAPMQALQIVAGGPGWLHPGRSGTIQIGPQNVLGYFGEMHPRALEALGADGPLMVFEVILDRVPEAKKRPTRAKPLIELSAFQPVSRDFAFIVDRTVKAGDIVRAAQGVDKKLITGVNVFDVYEGKGIDDGKKSIAIAVTIQPREKTLTDQEIEAVAAKVVAEVTKKTGGTLRA.

The tRNA-binding domain occupies 39–150 (AKALKPFTIA…ADAPIGAAYA (112 aa)). The B5 domain maps to 400–475 (GDDRVIDFPV…RIYGVDKVPM (76 aa)). Mg(2+) contacts are provided by Asp453, Asp459, Glu462, and Glu463. In terms of domain architecture, FDX-ACB spans 708–801 (SAFQPVSRDF…VTKKTGGTLR (94 aa)).

It belongs to the phenylalanyl-tRNA synthetase beta subunit family. Type 1 subfamily. As to quaternary structure, tetramer of two alpha and two beta subunits. The cofactor is Mg(2+).

The protein localises to the cytoplasm. The enzyme catalyses tRNA(Phe) + L-phenylalanine + ATP = L-phenylalanyl-tRNA(Phe) + AMP + diphosphate + H(+). The sequence is that of Phenylalanine--tRNA ligase beta subunit from Bradyrhizobium diazoefficiens (strain JCM 10833 / BCRC 13528 / IAM 13628 / NBRC 14792 / USDA 110).